The following is a 1336-amino-acid chain: Aldehyde oxidase 4 (1336 aa).

Positions 8-95 constitute a 2Fe-2S ferredoxin-type domain; the sequence is DELIFFVNGK…GAAITTVEGV (88 aa). 4 residues coordinate [2Fe-2S] cluster: Cys-47, Cys-52, Cys-55, and Cys-77. Residue Gln-116 participates in Mo-molybdopterin binding. [2Fe-2S] cluster-binding residues include Cys-117, Cys-120, Cys-152, and Cys-154. Residue Cys-154 coordinates Mo-molybdopterin. The FAD-binding PCMH-type domain occupies 237–423; sequence FQGKRTTWII…LSIFIPYTAQ (187 aa). FAD contacts are provided by residues 265–272, Ala-346, Thr-355, His-359, Asp-368, and Ile-413; that span reads LVMGNTTV. Mo-molybdopterin contacts are provided by residues 804 to 805, Leu-1045, 1086 to 1089, Gln-1201, and Leu-1265; these read AF and GSMG. The Proton acceptor; for azaheterocycle hydroxylase activity role is filled by Glu-1267.

It belongs to the xanthine dehydrogenase family. In terms of assembly, homodimer. [2Fe-2S] cluster is required as a cofactor. Requires FAD as cofactor. It depends on Mo-molybdopterin as a cofactor. As to expression, highly expressed in Harderian glands and sebaceous glands with detectable levels in the epidermis and other keratinized epithelia (at protein level). Detected in testis. The expression is 3 times greater in females than in males.

The protein resides in the cytoplasm. It catalyses the reaction an aldehyde + O2 + H2O = a carboxylate + H2O2 + H(+). It carries out the reaction retinal + O2 + H2O = retinoate + H2O2 + H(+). The catalysed reaction is all-trans-retinal + O2 + H2O = all-trans-retinoate + H2O2 + H(+). Functionally, aldehyde oxidase able to catalyze the oxidation of retinaldehyde into retinoate. Is responsible for the major all-trans-retinaldehyde-metabolizing activity in the Harderian gland, and contributes a significant amount of the same activity in the skin. Is devoid of pyridoxal-oxidizing activity, in contrast to the other aldehyde oxidases. Acts as a negative modulator of the epidermal trophism. May be able to oxidize a wide variety of aldehydes into their corresponding carboxylates and to hydroxylate azaheterocycles. In Mus musculus (Mouse), this protein is Aldehyde oxidase 4 (Aox4).